A 685-amino-acid chain; its full sequence is Probable transketolase (685 aa).

H32 contributes to the substrate binding site. Residues H72 and 121 to 123 (GPL) contribute to the thiamine diphosphate site. D162 contributes to the Mg(2+) binding site. Positions 163 and 192 each coordinate thiamine diphosphate. Mg(2+)-binding residues include N192 and I194. Substrate-binding residues include H268, R363, and S390. H268 contributes to the thiamine diphosphate binding site. Thiamine diphosphate is bound by residues E422 and F448. The active-site Proton donor is the E422. Substrate-binding residues include H472, D480, and R531.

Belongs to the transketolase family. In terms of assembly, homodimer. The cofactor is Mg(2+). Requires Ca(2+) as cofactor. Mn(2+) is required as a cofactor. Co(2+) serves as cofactor. It depends on thiamine diphosphate as a cofactor.

The catalysed reaction is D-sedoheptulose 7-phosphate + D-glyceraldehyde 3-phosphate = aldehydo-D-ribose 5-phosphate + D-xylulose 5-phosphate. Functionally, catalyzes the transfer of a two-carbon ketol group from a ketose donor to an aldose acceptor, via a covalent intermediate with the cofactor thiamine pyrophosphate. The chain is Probable transketolase from Schizosaccharomyces pombe (strain 972 / ATCC 24843) (Fission yeast).